The following is a 600-amino-acid chain: NADH-quinone oxidoreductase subunit C/D (600 aa).

Positions Met-1–Gln-190 are NADH dehydrogenase I subunit C. The tract at residues Asp-214–Arg-600 is NADH dehydrogenase I subunit D.

It in the N-terminal section; belongs to the complex I 30 kDa subunit family. In the C-terminal section; belongs to the complex I 49 kDa subunit family. As to quaternary structure, NDH-1 is composed of 13 different subunits. Subunits NuoB, CD, E, F, and G constitute the peripheral sector of the complex.

Its subcellular location is the cell inner membrane. The enzyme catalyses a quinone + NADH + 5 H(+)(in) = a quinol + NAD(+) + 4 H(+)(out). Functionally, NDH-1 shuttles electrons from NADH, via FMN and iron-sulfur (Fe-S) centers, to quinones in the respiratory chain. The immediate electron acceptor for the enzyme in this species is believed to be ubiquinone. Couples the redox reaction to proton translocation (for every two electrons transferred, four hydrogen ions are translocated across the cytoplasmic membrane), and thus conserves the redox energy in a proton gradient. This Salmonella paratyphi A (strain ATCC 9150 / SARB42) protein is NADH-quinone oxidoreductase subunit C/D.